Here is a 225-residue protein sequence, read N- to C-terminus: Small ribosomal subunit protein uS2 (225 aa).

Over residues methionine 1–alanine 14 the composition is skewed to basic and acidic residues. Positions methionine 1–glycine 33 are disordered.

Belongs to the universal ribosomal protein uS2 family.

The protein is Small ribosomal subunit protein uS2 of Methanosarcina barkeri (strain Fusaro / DSM 804).